A 343-amino-acid chain; its full sequence is Ribosomal RNA small subunit methyltransferase C (343 aa).

The protein belongs to the methyltransferase superfamily. RsmC family. As to quaternary structure, monomer.

The protein resides in the cytoplasm. The enzyme catalyses guanosine(1207) in 16S rRNA + S-adenosyl-L-methionine = N(2)-methylguanosine(1207) in 16S rRNA + S-adenosyl-L-homocysteine + H(+). In terms of biological role, specifically methylates the guanine in position 1207 of 16S rRNA in the 30S particle. This Escherichia coli (strain SMS-3-5 / SECEC) protein is Ribosomal RNA small subunit methyltransferase C.